Reading from the N-terminus, the 657-residue chain is Hemocyanin B chain (657 aa).

Residues C93 and C98 are joined by a disulfide bond. N-linked (GlcNAc...) asparagine glycosylation is present at N167. 6 residues coordinate Cu cation: H194, H198, H224, H344, H348, and H384. Cystine bridges form between C483-C502 and C562-C609.

This sequence belongs to the tyrosinase family. Hemocyanin subfamily. Hexamer of a number of different chains, of which A, B, and C have been identified. As to expression, hemolymph.

It localises to the secreted. The protein localises to the extracellular space. Its function is as follows. Hemocyanins are copper-containing oxygen carriers occurring freely dissolved in the hemolymph of many mollusks and arthropods. In Panulirus interruptus (California spiny lobster), this protein is Hemocyanin B chain.